Here is a 156-residue protein sequence, read N- to C-terminus: Bursicon (156 aa).

A signal peptide spans methionine 1–alanine 26. 5 disulfides stabilise this stretch: cysteine 37-cysteine 86, cysteine 51-cysteine 100, cysteine 61-cysteine 121, cysteine 65-cysteine 123, and cysteine 83-cysteine 126. The region spanning cysteine 37–glycine 127 is the CTCK domain.

Heterodimer of burs and pburs.

The protein localises to the secreted. Final heterodimeric neurohormone released at the end of the molting cycle, involved in the sclerotization (tanning) of the insect cuticle, melanization and wing spreading. The chain is Bursicon from Manduca sexta (Tobacco hawkmoth).